The chain runs to 202 residues: dITP/XTP pyrophosphatase (202 aa).

Position 7–12 (7–12) interacts with substrate; the sequence is SRNEAK. The active-site Proton acceptor is the D68. Residue D68 coordinates Mg(2+). Residues S69, 156 to 159, K179, and 184 to 185 contribute to the substrate site; these read FGYD and HR.

This sequence belongs to the HAM1 NTPase family. As to quaternary structure, homodimer. It depends on Mg(2+) as a cofactor.

It catalyses the reaction XTP + H2O = XMP + diphosphate + H(+). The catalysed reaction is dITP + H2O = dIMP + diphosphate + H(+). The enzyme catalyses ITP + H2O = IMP + diphosphate + H(+). Functionally, pyrophosphatase that catalyzes the hydrolysis of nucleoside triphosphates to their monophosphate derivatives, with a high preference for the non-canonical purine nucleotides XTP (xanthosine triphosphate), dITP (deoxyinosine triphosphate) and ITP. Seems to function as a house-cleaning enzyme that removes non-canonical purine nucleotides from the nucleotide pool, thus preventing their incorporation into DNA/RNA and avoiding chromosomal lesions. This chain is dITP/XTP pyrophosphatase, found in Frankia alni (strain DSM 45986 / CECT 9034 / ACN14a).